The sequence spans 153 residues: MSTDPISLQEIMSFLPHRYPFLLIDRIVEVEQGKRILAIKNVSFNEPHFQGHFPDHPVMPGVLILEAMAQAGALLAGYTDPDSVRGQLVYFMAIDKARFRKPVLPGHQLNIEMTLLKRRREVWRFGGKAMVDGEVACEAEVMAMTRKREESHE.

His-52 is a catalytic residue.

The protein belongs to the thioester dehydratase family. FabZ subfamily.

It localises to the cytoplasm. It catalyses the reaction a (3R)-hydroxyacyl-[ACP] = a (2E)-enoyl-[ACP] + H2O. Involved in unsaturated fatty acids biosynthesis. Catalyzes the dehydration of short chain beta-hydroxyacyl-ACPs and long chain saturated and unsaturated beta-hydroxyacyl-ACPs. This chain is 3-hydroxyacyl-[acyl-carrier-protein] dehydratase FabZ, found in Magnetococcus marinus (strain ATCC BAA-1437 / JCM 17883 / MC-1).